Consider the following 463-residue polypeptide: Trigger factor (463 aa).

One can recognise a PPIase FKBP-type domain in the interval 162-243; that stretch reads GDVVTLDLEA…VSQVAARELP (82 aa). Residues 427–463 are disordered; it reads TNGEIVDLDDEDETESTPETTEAAEAAEESTEDKPEA. The segment covering 432-442 has biased composition (acidic residues); the sequence is VDLDDEDETES.

Belongs to the FKBP-type PPIase family. Tig subfamily.

It is found in the cytoplasm. It carries out the reaction [protein]-peptidylproline (omega=180) = [protein]-peptidylproline (omega=0). Functionally, involved in protein export. Acts as a chaperone by maintaining the newly synthesized protein in an open conformation. Functions as a peptidyl-prolyl cis-trans isomerase. In Streptomyces avermitilis (strain ATCC 31267 / DSM 46492 / JCM 5070 / NBRC 14893 / NCIMB 12804 / NRRL 8165 / MA-4680), this protein is Trigger factor.